Reading from the N-terminus, the 351-residue chain is Putative F-box protein At4g09790 (351 aa).

One can recognise an F-box domain in the interval 1 to 51 (MTTICDLPRDLVARILSRVPLTSMRRVRFTCKRWNTISKDPSFAKTHFGKA).

This is Putative F-box protein At4g09790 from Arabidopsis thaliana (Mouse-ear cress).